Consider the following 230-residue polypeptide: Ribosomal RNA small subunit methyltransferase I (230 aa).

The protein belongs to the methyltransferase superfamily. RsmI family.

It localises to the cytoplasm. The enzyme catalyses cytidine(1402) in 16S rRNA + S-adenosyl-L-methionine = 2'-O-methylcytidine(1402) in 16S rRNA + S-adenosyl-L-homocysteine + H(+). Functionally, catalyzes the 2'-O-methylation of the ribose of cytidine 1402 (C1402) in 16S rRNA. The sequence is that of Ribosomal RNA small subunit methyltransferase I from Hydrogenobaculum sp. (strain Y04AAS1).